Consider the following 56-residue polypeptide: Preprotein translocase subunit SecG (56 aa).

At 1-29 (MAKEKATLPPTGAGLMRFFDEDTKAVKIS) the chain is on the cytoplasmic side. A helical transmembrane segment spans residues 30 to 51 (PRGVIALTLILVALEILLHAFG). Over 52-56 (PQIFG) the chain is Extracellular.

Belongs to the SEC61-beta family. In terms of assembly, component of the protein translocase complex. Heterotrimer consisting of alpha (SecY), beta (SecG) and gamma (SecE) subunits. Can form oligomers of the heterotrimer.

Its subcellular location is the cell membrane. Functionally, involved in protein export. The function of the beta subunit is unknown, but it may be involved in stabilization of the trimeric complex. This is Preprotein translocase subunit SecG from Thermococcus onnurineus (strain NA1).